We begin with the raw amino-acid sequence, 129 residues long: N16.5 matrix protein (129 aa).

An N-terminal signal peptide occupies residues 1–23 (MTCTLRWTITALVLLGICHLARP). Repeat copies occupy residues 91-92 (NG), 93-94 (NG), 95-96 (NG), 97-98 (NG), and 99-100 (NG). Positions 91–100 (NGNGNGNGNG) are 5 X 2 AA tandem repeats of N-G.

It belongs to the N16 matrix protein family. In terms of assembly, heterooligomer; disulfide-linked. Pif97, Pif80, N16 and other proteins form a complex. Component of conchiolin, the organic matrix of nacre. Specifically expressed in mantle epithelium.

It is found in the secreted. Its subcellular location is the extracellular space. The protein localises to the extracellular matrix. Functionally, may be specifically involved in the formation of the nacreous layer. The sequence is that of N16.5 matrix protein from Pinctada fucata (Akoya pearl oyster).